The chain runs to 193 residues: ATP-dependent Clp protease proteolytic subunit 1 (193 aa).

Residue Ser98 is the Nucleophile of the active site. His123 is an active-site residue.

This sequence belongs to the peptidase S14 family. As to quaternary structure, fourteen ClpP subunits assemble into 2 heptameric rings which stack back to back to give a disk-like structure with a central cavity, resembling the structure of eukaryotic proteasomes.

The protein localises to the cytoplasm. It carries out the reaction Hydrolysis of proteins to small peptides in the presence of ATP and magnesium. alpha-casein is the usual test substrate. In the absence of ATP, only oligopeptides shorter than five residues are hydrolyzed (such as succinyl-Leu-Tyr-|-NHMec, and Leu-Tyr-Leu-|-Tyr-Trp, in which cleavage of the -Tyr-|-Leu- and -Tyr-|-Trp bonds also occurs).. Its function is as follows. Cleaves peptides in various proteins in a process that requires ATP hydrolysis. Has a chymotrypsin-like activity. Plays a major role in the degradation of misfolded proteins. This chain is ATP-dependent Clp protease proteolytic subunit 1, found in Bacillus anthracis.